An 872-amino-acid polypeptide reads, in one-letter code: Leucine--tRNA ligase (872 aa).

Residues 42 to 52 (PYPSGSLHMGH) carry the 'HIGH' region motif. Residues 634-638 (TMSKS) carry the 'KMSKS' region motif. Lys637 lines the ATP pocket.

Belongs to the class-I aminoacyl-tRNA synthetase family.

It is found in the cytoplasm. It catalyses the reaction tRNA(Leu) + L-leucine + ATP = L-leucyl-tRNA(Leu) + AMP + diphosphate. The chain is Leucine--tRNA ligase from Trichormus variabilis (strain ATCC 29413 / PCC 7937) (Anabaena variabilis).